A 391-amino-acid chain; its full sequence is MGEENQPNYTISQENWSLHRKGYDDQQRHQEKVQEAIKNNLPDLVTEESIVMSNGKDVVKIPIRSLDEYKIRYNYDKNKHVGQGNGDSKVGDVVARDGSGGQKQKGPGKGQGAGDAAGEDYYEAEVSILELEQAFFRELELPNLKRKEIDENRIEHVEFNDIRKTGLWGNIDKKRTMISAYKRNAMRGKASFHPIHQEDLKFRTWNEVLKPDSKAVVLAMMDTSGSMGMWEKYMARSFFFWMTRFLRTKYETVDIEFIAHHTEAKVVTEEEFFSKGESGGTICSSVYKKALELIDNKYSPDRYNIYPFHFSDGDNLTSDNARCVKLVEELMKKCNMFGYGEVNQYNRHSTLMSAYKNIKDENFRYYILKQKADVFHAMKSFFREESGEKMA.

Over residues methionine 1–tryptophan 16 the composition is skewed to polar residues. 2 disordered regions span residues methionine 1–glutamate 31 and histidine 80–alanine 117. The segment covering lysine 21–glutamate 31 has biased composition (basic and acidic residues). The span at glycine 98–aspartate 115 shows a compositional bias: gly residues.

It belongs to the UPF0229 family.

The sequence is that of UPF0229 protein BCG9842_B4751 from Bacillus cereus (strain G9842).